Consider the following 466-residue polypeptide: Asparagine--tRNA ligase (466 aa).

The protein belongs to the class-II aminoacyl-tRNA synthetase family. As to quaternary structure, homodimer.

It is found in the cytoplasm. It catalyses the reaction tRNA(Asn) + L-asparagine + ATP = L-asparaginyl-tRNA(Asn) + AMP + diphosphate + H(+). The protein is Asparagine--tRNA ligase of Shewanella baltica (strain OS155 / ATCC BAA-1091).